The primary structure comprises 766 residues: Single-minded homolog 1 (766 aa).

Positions 1-53 (MKEKSKNAARTRREKENSEFYELAKLLPLPSAITSQLDKASIIRLTTSYLKMR) constitute a bHLH domain. 2 consecutive PAS domains span residues 77 to 147 (GREL…QPYH) and 218 to 288 (PPSA…LVKG). Residues 292–335 (TKYYRFLAKHGGWVWVQSYATIVHNSRSSRPHCIVSVNYVLTDT) enclose the PAC domain. One can recognise a Single-minded C-terminal domain in the interval 336–766 (EYKGLQLSLD…GTSVIITNGS (431 aa)). The segment covering 353–365 (AFSYTSSSTPTMT) has biased composition (polar residues). 2 disordered regions span residues 353–431 (AFSY…SQHD) and 528–563 (WDEDSVVSSPDPGSASESGDRYRTEQYQSSPHEPSK). A Nuclear localization signal motif is present at residues 368–387 (RKGAKSRLSSSKSKSRTSPY). Low complexity predominate over residues 373–385 (SRLSSSKSKSRTS). Basic and acidic residues predominate over residues 394–404 (HTERSESDHDS).

As to quaternary structure, efficient DNA binding requires dimerization with another bHLH protein. Heterodimer; forms a heterodimer with ARNT, ARNT2.

It is found in the nucleus. Transcriptional factor that may have pleiotropic effects during embryogenesis and in the adult. In Homo sapiens (Human), this protein is Single-minded homolog 1 (SIM1).